Reading from the N-terminus, the 182-residue chain is uncharacterized protein (182 aa).

It belongs to the mimivirus L6/L7/L57 family.

This is an uncharacterized protein from Acanthamoeba polyphaga mimivirus (APMV).